The chain runs to 709 residues: Elongation factor G (709 aa).

Residues 10–295 (NQVRNIGIMA…AVVDYLPSPE (286 aa)) enclose the tr-type G domain. Residues 19-26 (AHIDAGKT), 91-95 (DTPGH), and 145-148 (NKMD) each bind GTP.

This sequence belongs to the TRAFAC class translation factor GTPase superfamily. Classic translation factor GTPase family. EF-G/EF-2 subfamily.

It is found in the cytoplasm. Functionally, catalyzes the GTP-dependent ribosomal translocation step during translation elongation. During this step, the ribosome changes from the pre-translocational (PRE) to the post-translocational (POST) state as the newly formed A-site-bound peptidyl-tRNA and P-site-bound deacylated tRNA move to the P and E sites, respectively. Catalyzes the coordinated movement of the two tRNA molecules, the mRNA and conformational changes in the ribosome. This Bifidobacterium animalis subsp. lactis (strain AD011) protein is Elongation factor G.